The primary structure comprises 150 residues: UPF0756 membrane protein Dd703_1075 (150 aa).

The next 4 membrane-spanning stretches (helical) occupy residues 8-28, 51-71, 81-101, and 114-134; these read LLIL…TITL, YGLS…IASG, AFLN…SWLG, and VVAG…GVPV.

This sequence belongs to the UPF0756 family.

The protein resides in the cell membrane. This Musicola paradisiaca (strain Ech703) (Dickeya paradisiaca) protein is UPF0756 membrane protein Dd703_1075.